The sequence spans 101 residues: Small ribosomal subunit protein bS18c (101 aa).

Belongs to the bacterial ribosomal protein bS18 family. Component of the chloroplast small ribosomal subunit (SSU). Mature 70S chloroplast ribosomes of higher plants consist of a small (30S) and a large (50S) subunit. The 30S small subunit contains 1 molecule of ribosomal RNA (16S rRNA) and 24 different proteins. The 50S large subunit contains 3 rRNA molecules (23S, 5S and 4.5S rRNA) and 33 different proteins.

The protein resides in the plastid. It is found in the chloroplast. Functionally, component of the chloroplast ribosome (chloro-ribosome), a dedicated translation machinery responsible for the synthesis of chloroplast genome-encoded proteins, including proteins of the transcription and translation machinery and components of the photosynthetic apparatus. This chain is Small ribosomal subunit protein bS18c (RPS18), found in Spinacia oleracea (Spinach).